The primary structure comprises 215 residues: Probable nicotinate-nucleotide adenylyltransferase (215 aa).

Belongs to the NadD family.

The catalysed reaction is nicotinate beta-D-ribonucleotide + ATP + H(+) = deamido-NAD(+) + diphosphate. It functions in the pathway cofactor biosynthesis; NAD(+) biosynthesis; deamido-NAD(+) from nicotinate D-ribonucleotide: step 1/1. In terms of biological role, catalyzes the reversible adenylation of nicotinate mononucleotide (NaMN) to nicotinic acid adenine dinucleotide (NaAD). The protein is Probable nicotinate-nucleotide adenylyltransferase of Shewanella sp. (strain W3-18-1).